The chain runs to 589 residues: Zinc finger and BTB domain-containing protein 46 (589 aa).

A BTB domain is found at 31-99 (CDVCVVVEGK…MYSAHLALTS (69 aa)). The interval 173–330 (RRTSPANSSG…ASSSDSRGER (158 aa)) is disordered. Residues 197–207 (GKEDQEPKADG) show a composition bias toward basic and acidic residues. Residue Lys229 forms a Glycyl lysine isopeptide (Lys-Gly) (interchain with G-Cter in SUMO2) linkage. The residue at position 234 (Ser234) is a Phosphoserine. A compositionally biased stretch (polar residues) spans 305-325 (WPFSSRDSNADLSVTEASSSD). 2 consecutive C2H2-type zinc fingers follow at residues 418–436 (FKCP…LKRH) and 446–468 (YPCE…TLVH). The segment at 512–589 (PLDHGGGGGE…GPDKDFAWLS (78 aa)) is disordered. Acidic residues predominate over residues 546–570 (EELGEDDEGLAPEDALLADDKDEED).

Post-translationally, sumoylated. Desumoylation by DESI1 reverses transcriptional repression activity.

The protein localises to the nucleus. Functionally, functions as a transcriptional repressor for PRDM1. This Homo sapiens (Human) protein is Zinc finger and BTB domain-containing protein 46 (ZBTB46).